A 342-amino-acid chain; its full sequence is Tetraacyldisaccharide 4'-kinase (342 aa).

68–75 (TVGGTGKT) lines the ATP pocket.

This sequence belongs to the LpxK family.

The enzyme catalyses a lipid A disaccharide + ATP = a lipid IVA + ADP + H(+). Its pathway is glycolipid biosynthesis; lipid IV(A) biosynthesis; lipid IV(A) from (3R)-3-hydroxytetradecanoyl-[acyl-carrier-protein] and UDP-N-acetyl-alpha-D-glucosamine: step 6/6. Transfers the gamma-phosphate of ATP to the 4'-position of a tetraacyldisaccharide 1-phosphate intermediate (termed DS-1-P) to form tetraacyldisaccharide 1,4'-bis-phosphate (lipid IVA). The chain is Tetraacyldisaccharide 4'-kinase from Burkholderia thailandensis (strain ATCC 700388 / DSM 13276 / CCUG 48851 / CIP 106301 / E264).